Consider the following 180-residue polypeptide: Inner membrane-spanning protein YciB (180 aa).

6 consecutive transmembrane segments (helical) span residues 4–24 (LLSE…GGGI), 25–45 (QSAT…CYII), 49–69 (VSKL…ITLI), 76–96 (IKIK…MSGI), 118–138 (IILS…NEVV), and 150–170 (FKVF…LPLL).

This sequence belongs to the YciB family.

Its subcellular location is the cell inner membrane. Its function is as follows. Plays a role in cell envelope biogenesis, maintenance of cell envelope integrity and membrane homeostasis. This is Inner membrane-spanning protein YciB from Rickettsia typhi (strain ATCC VR-144 / Wilmington).